A 297-amino-acid chain; its full sequence is uncharacterized protein (297 aa).

3 disordered regions span residues 19 to 133 (NEVD…EEKE), 147 to 214 (AEDD…VGIA), and 226 to 277 (EKTS…SKEA). Basic and acidic residues predominate over residues 41–52 (EEPKNEKEKHDD). Residues 77–87 (PAEDDEEDEEF) are compositionally biased toward acidic residues. The span at 88-101 (PSQSYGPSIPSNFR) shows a compositional bias: polar residues. 2 stretches are compositionally biased toward basic and acidic residues: residues 147–161 (AEDDEKNFQPKREEW) and 236–268 (IHQKKRDEKVKDAGYAQGERRPFDREKDMEVRG).

This is an uncharacterized protein from Caenorhabditis elegans.